The chain runs to 427 residues: Glutamate-1-semialdehyde 2,1-aminomutase (427 aa).

Residue Lys-265 is modified to N6-(pyridoxal phosphate)lysine.

It belongs to the class-III pyridoxal-phosphate-dependent aminotransferase family. HemL subfamily. In terms of assembly, homodimer. Pyridoxal 5'-phosphate is required as a cofactor.

Its subcellular location is the cytoplasm. The enzyme catalyses (S)-4-amino-5-oxopentanoate = 5-aminolevulinate. Its pathway is porphyrin-containing compound metabolism; protoporphyrin-IX biosynthesis; 5-aminolevulinate from L-glutamyl-tRNA(Glu): step 2/2. This Pseudomonas putida (strain W619) protein is Glutamate-1-semialdehyde 2,1-aminomutase.